The chain runs to 284 residues: Bifunctional protein FolD (284 aa).

NADP(+) is bound by residues 165–167, serine 190, and valine 231; that span reads GRS.

Belongs to the tetrahydrofolate dehydrogenase/cyclohydrolase family. Homodimer.

The catalysed reaction is (6R)-5,10-methylene-5,6,7,8-tetrahydrofolate + NADP(+) = (6R)-5,10-methenyltetrahydrofolate + NADPH. The enzyme catalyses (6R)-5,10-methenyltetrahydrofolate + H2O = (6R)-10-formyltetrahydrofolate + H(+). It functions in the pathway one-carbon metabolism; tetrahydrofolate interconversion. Its function is as follows. Catalyzes the oxidation of 5,10-methylenetetrahydrofolate to 5,10-methenyltetrahydrofolate and then the hydrolysis of 5,10-methenyltetrahydrofolate to 10-formyltetrahydrofolate. In Geobacillus kaustophilus (strain HTA426), this protein is Bifunctional protein FolD.